We begin with the raw amino-acid sequence, 997 residues long: Mannuronan C5-epimerase AlgE2 (997 aa).

PbH1 repeat units lie at residues 133–155, 157–179, 180–202, 204–226, 257–279, 280–315, and 320–359; these read DRDVTLERVEIREMSGYGFDPHE, TINLTIRDSVAHDNGLDGFVADF, QIGGVFENNVSYNNDRHGFNIVT, TNDFVLSNNVAYGNGGAGLVVQR, AHDVTLQNAEIYGNGLYGVRVYG, AEDVQILDNYIHDNSQNGSYAEILLQSYDDTAGVSG, and TTGTWIEGNTIVGSANSTYGIQERDDGTDYSSLYANSVSN. 10 Hemolysin-type calcium-binding repeats span residues 388–403, 406–422, 424–439, 557–573, 574–591, 696–711, 713–730, 828–839, 846–862, and 864–880; these read GTAGNDTLGGSDAHET, GLDGNDRLNGGAGNDIL, GGAGRDNLTGGAGADL, GHAGNDTLDGGAGDDIL, VGGAGRDSLTGGAGADVF, GSAGNDSLQGTAADEV, HGGGGRDTLAGGAGADVF, GGDGNDTLSGSS, GGVGNDSLDGGAGNDIL, and GGAGRDTLSGGSGSDIF.

This sequence belongs to the D-mannuronate C5-epimerase family. Ca(2+) is required as a cofactor.

It localises to the secreted. The enzyme catalyses [(1-&gt;4)-beta-D-mannuronosyl](n) = [alginate](n). It participates in glycan biosynthesis; alginate biosynthesis. With respect to regulation, inhibited by zinc. In terms of biological role, converts beta-D-mannuronic acid (M) to alpha-L-guluronic acid (G), producing a polymer with gel-forming capacity, required for the formation of the cyst coat. This chain is Mannuronan C5-epimerase AlgE2, found in Azotobacter vinelandii.